The following is a 67-amino-acid chain: Large ribosomal subunit protein bL35 (67 aa).

Belongs to the bacterial ribosomal protein bL35 family.

The sequence is that of Large ribosomal subunit protein bL35 from Rhizobium etli (strain ATCC 51251 / DSM 11541 / JCM 21823 / NBRC 15573 / CFN 42).